Reading from the N-terminus, the 206-residue chain is Small ribosomal subunit protein uS4 (206 aa).

The S4 RNA-binding domain maps to Cys-96–Gln-157.

Belongs to the universal ribosomal protein uS4 family. As to quaternary structure, part of the 30S ribosomal subunit. Contacts protein S5. The interaction surface between S4 and S5 is involved in control of translational fidelity.

One of the primary rRNA binding proteins, it binds directly to 16S rRNA where it nucleates assembly of the body of the 30S subunit. In terms of biological role, with S5 and S12 plays an important role in translational accuracy. The protein is Small ribosomal subunit protein uS4 of Stutzerimonas stutzeri (strain A1501) (Pseudomonas stutzeri).